The primary structure comprises 187 residues: Peptide methionine sulfoxide reductase A2-1 (187 aa).

This sequence belongs to the MsrA Met sulfoxide reductase family.

It is found in the cytoplasm. The protein localises to the cytosol. The enzyme catalyses L-methionyl-[protein] + [thioredoxin]-disulfide + H2O = L-methionyl-(S)-S-oxide-[protein] + [thioredoxin]-dithiol. It catalyses the reaction [thioredoxin]-disulfide + L-methionine + H2O = L-methionine (S)-S-oxide + [thioredoxin]-dithiol. Catalyzes the reduction of methionine sulfoxide (MetSO) to methionine in proteins. Plays a protective role against oxidative stress by restoring activity to proteins that have been inactivated by methionine oxidation. MSRA family specifically reduces the MetSO S-enantiomer. The polypeptide is Peptide methionine sulfoxide reductase A2-1 (MSRA2-1) (Oryza sativa subsp. japonica (Rice)).